A 346-amino-acid chain; its full sequence is Uroporphyrinogen decarboxylase (346 aa).

Substrate-binding positions include 23–27 (RQAGR), aspartate 73, tyrosine 151, serine 206, and histidine 321.

It belongs to the uroporphyrinogen decarboxylase family. In terms of assembly, homodimer.

The protein resides in the cytoplasm. The enzyme catalyses uroporphyrinogen III + 4 H(+) = coproporphyrinogen III + 4 CO2. The protein operates within porphyrin-containing compound metabolism; protoporphyrin-IX biosynthesis; coproporphyrinogen-III from 5-aminolevulinate: step 4/4. In terms of biological role, catalyzes the decarboxylation of four acetate groups of uroporphyrinogen-III to yield coproporphyrinogen-III. This chain is Uroporphyrinogen decarboxylase, found in Aliarcobacter butzleri (strain RM4018) (Arcobacter butzleri).